The following is a 184-amino-acid chain: Photosystem I assembly protein Ycf4 (184 aa).

The next 2 membrane-spanning stretches (helical) occupy residues 22–42 and 57–77; these read FFWAFILFLGSLGFLLVGTSS and IIFFPQGIVMSFYGIAGLFIS.

This sequence belongs to the Ycf4 family.

Its subcellular location is the plastid. It localises to the chloroplast thylakoid membrane. Seems to be required for the assembly of the photosystem I complex. This Aethionema grandiflorum (Persian stone-cress) protein is Photosystem I assembly protein Ycf4.